We begin with the raw amino-acid sequence, 122 residues long: Large ribosomal subunit protein uL14 (122 aa).

The protein belongs to the universal ribosomal protein uL14 family. Part of the 50S ribosomal subunit. Forms a cluster with proteins L3 and L19. In the 70S ribosome, L14 and L19 interact and together make contacts with the 16S rRNA in bridges B5 and B8.

Binds to 23S rRNA. Forms part of two intersubunit bridges in the 70S ribosome. This Chlorobaculum parvum (strain DSM 263 / NCIMB 8327) (Chlorobium vibrioforme subsp. thiosulfatophilum) protein is Large ribosomal subunit protein uL14.